Consider the following 570-residue polypeptide: Dual specificity testis-specific protein kinase 2 (570 aa).

Residues 58–313 form the Protein kinase domain; sequence DFTREKIGSG…EIGKTLKEIM (256 aa). ATP is bound by residues 64–72 and Lys-87; that span reads IGSGFFSEV. Asp-176 acts as the Proton acceptor in catalysis. Ser-219 carries the post-translational modification Phosphoserine; by autocatalysis. Over residues 316 to 327 the composition is skewed to basic and acidic residues; sequence LPEEELERDRKL. Positions 316 to 357 are disordered; sequence LPEEELERDRKLQPTAKGPLEKVPGGKRLSSLDDKIPHKSPR. Ser-369, Ser-456, and Ser-460 each carry phosphoserine. A disordered region spans residues 511-530; that stretch reads AMDCSNPQEENGFGPRLKGT.

Belongs to the protein kinase superfamily. TKL Ser/Thr protein kinase family. Mg(2+) serves as cofactor. The cofactor is Mn(2+).

Its subcellular location is the nucleus. It carries out the reaction L-seryl-[protein] + ATP = O-phospho-L-seryl-[protein] + ADP + H(+). It catalyses the reaction L-threonyl-[protein] + ATP = O-phospho-L-threonyl-[protein] + ADP + H(+). The enzyme catalyses L-tyrosyl-[protein] + ATP = O-phospho-L-tyrosyl-[protein] + ADP + H(+). Activated by autophosphorylation on Ser-219. Dual specificity protein kinase activity catalyzing autophosphorylation and phosphorylation of exogenous substrates on both serine/threonine and tyrosine residues. Phosphorylates cofilin at 'Ser-3'. May play an important role in spermatogenesis. In Mus musculus (Mouse), this protein is Dual specificity testis-specific protein kinase 2 (Tesk2).